A 466-amino-acid chain; its full sequence is Alpha-1A adrenergic receptor (466 aa).

Residues 1–27 lie on the Extracellular side of the membrane; the sequence is MVFLSGNASDSSNCTHPPPPVNISKAI. Residues N7, N13, and N22 are each glycosylated (N-linked (GlcNAc...) asparagine). Residues 28-51 traverse the membrane as a helical segment; the sequence is LLGVILGGLILFGVLGNILVILSV. Over 52–64 the chain is Cytoplasmic; sequence ACHRHLHSVTHYY. The chain crosses the membrane as a helical span at residues 65–88; that stretch reads IVNLAVADLLLTSTVLPFSAIFEI. Topologically, residues 89 to 99 are extracellular; it reads LGYWAFGRVFC. The cysteines at positions 99 and 176 are disulfide-linked. Residues 100 to 122 traverse the membrane as a helical segment; sequence NVWAAVDVLCCTASIMGLCIISI. Over 123-143 the chain is Cytoplasmic; the sequence is DRYIGVSYPLRYPTIVTQKRG. Residues 144 to 167 traverse the membrane as a helical segment; that stretch reads LMALLCVWALSLVISIGPLFGWRQ. The Extracellular portion of the chain corresponds to 168 to 181; sequence PAPEDETICQINEE. Residues 182-205 traverse the membrane as a helical segment; that stretch reads PGYVLFSALGSFYVPLTIILVMYC. The Cytoplasmic segment spans residues 206–273; it reads RVYVVAKRES…FSREKKAAKT (68 aa). Phosphoserine; by PKA is present on S215. A helical membrane pass occupies residues 274–297; that stretch reads LGIVVGCFVLCWLPFFLVMPIGSF. At 298-305 the chain is on the extracellular side; that stretch reads FPDFRPSE. Residues 306 to 329 traverse the membrane as a helical segment; it reads TVFKIAFWLGYLNSCINPIIYPCS. The Cytoplasmic segment spans residues 330–466; it reads SQEFKKAFQN…ISLSENGEEV (137 aa). A Nuclear localization signal motif is present at residues 334–349; the sequence is KKAFQNVLRIQCLRRK. C345 is lipidated: S-palmitoyl cysteine.

This sequence belongs to the G-protein coupled receptor 1 family. Adrenergic receptor subfamily. ADRA1A sub-subfamily. In terms of assembly, homo- and heterooligomer. Heterooligomerizes with ADRA1B homooligomers in cardiac myocytes. Interacts with CAVIN4.

The protein resides in the nucleus membrane. Its subcellular location is the cell membrane. It localises to the cytoplasm. It is found in the membrane. The protein localises to the caveola. Functionally, this alpha-adrenergic receptor mediates its action by association with G proteins that activate a phosphatidylinositol-calcium second messenger system. Its effect is mediated by G(q) and G(11) proteins. Nuclear ADRA1A-ADRA1B heterooligomers regulate phenylephrine (PE)-stimulated ERK signaling in cardiac myocytes. The sequence is that of Alpha-1A adrenergic receptor (ADRA1A) from Bos taurus (Bovine).